A 94-amino-acid chain; its full sequence is Co-chaperonin GroES (94 aa).

This sequence belongs to the GroES chaperonin family. Heptamer of 7 subunits arranged in a ring. Interacts with the chaperonin GroEL.

The protein localises to the cytoplasm. Functionally, together with the chaperonin GroEL, plays an essential role in assisting protein folding. The GroEL-GroES system forms a nano-cage that allows encapsulation of the non-native substrate proteins and provides a physical environment optimized to promote and accelerate protein folding. GroES binds to the apical surface of the GroEL ring, thereby capping the opening of the GroEL channel. The chain is Co-chaperonin GroES from Enterococcus faecalis (strain ATCC 700802 / V583).